A 125-amino-acid chain; its full sequence is Cu-Zn superoxide dismutase-like protein (125 aa).

Cysteines 52 and 102 form a disulfide.

This sequence belongs to the Cu-Zn superoxide dismutase family.

The protein localises to the host cytoplasm. Its function is as follows. Virion protein with no enzymatic activity. This is Cu-Zn superoxide dismutase-like protein from Camelpox virus (strain M-96).